The following is a 718-amino-acid chain: Probable protein S-acyltransferase 19 (718 aa).

2 helical membrane-spanning segments follow: residues 16-36 (VVAITVFCLLSVAYYAFFAPF) and 41-61 (IWEYILLGVYSPVALIVFVLY). Residues 100-125 (ETGSHLQSSPSVASRTSTLPNSSVKG) are disordered. The segment covering 103–124 (SHLQSSPSVASRTSTLPNSSVK) has biased composition (polar residues). The DHHC domain occupies 174-224 (LFCTLCNAEVRKFSKHCRSCDKCVDCFDHHCRWLNNCVGRKNYMTFISLMA). C204 serves as the catalytic S-palmitoyl cysteine intermediate. A run of 2 helical transmembrane segments spans residues 222-242 (LMAVSLLWLLIEAGVGIAVIV) and 277-297 (AVSMLALFPLGELFFFHMLLI). Disordered stretches follow at residues 454–511 (SSVS…HVHE), 598–649 (PATT…QQQQ), and 664–718 (GPLV…GTRK). 2 stretches are compositionally biased toward polar residues: residues 479 to 488 (CRNSYAPSQG) and 598 to 626 (PATTSEPRTRFSSQNQPIPSSHMGNTQNP). The span at 673–687 (DGLRHDGDSGREGQD) shows a compositional bias: basic and acidic residues.

Belongs to the DHHC palmitoyltransferase family.

The protein resides in the cell membrane. It carries out the reaction L-cysteinyl-[protein] + hexadecanoyl-CoA = S-hexadecanoyl-L-cysteinyl-[protein] + CoA. Its function is as follows. Palmitoyl acyltransferase. The chain is Probable protein S-acyltransferase 19 (PAT19) from Arabidopsis thaliana (Mouse-ear cress).